We begin with the raw amino-acid sequence, 233 residues long: Orotidine 5'-phosphate decarboxylase (233 aa).

Substrate-binding positions include Asp11, Lys34, 61–70 (DLKLHDIPNT), Thr117, Arg179, Gln188, Gly208, and Arg209. Lys63 (proton donor) is an active-site residue.

This sequence belongs to the OMP decarboxylase family. Type 1 subfamily. In terms of assembly, homodimer.

It carries out the reaction orotidine 5'-phosphate + H(+) = UMP + CO2. It functions in the pathway pyrimidine metabolism; UMP biosynthesis via de novo pathway; UMP from orotate: step 2/2. Functionally, catalyzes the decarboxylation of orotidine 5'-monophosphate (OMP) to uridine 5'-monophosphate (UMP). This Streptococcus pneumoniae (strain P1031) protein is Orotidine 5'-phosphate decarboxylase.